The chain runs to 101 residues: Large ribosomal subunit protein eL30 (101 aa).

The protein belongs to the eukaryotic ribosomal protein eL30 family.

This chain is Large ribosomal subunit protein eL30, found in Pyrobaculum islandicum (strain DSM 4184 / JCM 9189 / GEO3).